The following is a 206-amino-acid chain: Probable GTP-binding protein EngB (206 aa).

Positions 7 to 195 (DCDEVVLLGR…EEALQAIFSD (189 aa)) constitute an EngB-type G domain. GTP is bound by residues 15 to 22 (GRSNVGKS), 41 to 45 (GVTRS), 60 to 63 (DLPG), 140 to 143 (NKID), and 175 to 177 (ISA). Positions 22 and 43 each coordinate Mg(2+).

The protein belongs to the TRAFAC class TrmE-Era-EngA-EngB-Septin-like GTPase superfamily. EngB GTPase family. Requires Mg(2+) as cofactor.

Necessary for normal cell division and for the maintenance of normal septation. This is Probable GTP-binding protein EngB from Haloquadratum walsbyi (strain DSM 16790 / HBSQ001).